The primary structure comprises 474 residues: tRNA-2-methylthio-N(6)-dimethylallyladenosine synthase (474 aa).

Positions 3-120 constitute an MTTase N-terminal domain; the sequence is KKLHIKTWGC…LPEMINHVNG (118 aa). Residues Cys-12, Cys-49, Cys-83, Cys-157, Cys-161, and Cys-164 each contribute to the [4Fe-4S] cluster site. The Radical SAM core domain occupies 143-375; sequence RAEGPTAFVS…QERITQQAMQ (233 aa). One can recognise a TRAM domain in the interval 378–441; the sequence is RRMKGKVQRI…PNSLRGVLLR (64 aa).

This sequence belongs to the methylthiotransferase family. MiaB subfamily. Monomer. The cofactor is [4Fe-4S] cluster.

Its subcellular location is the cytoplasm. It carries out the reaction N(6)-dimethylallyladenosine(37) in tRNA + (sulfur carrier)-SH + AH2 + 2 S-adenosyl-L-methionine = 2-methylsulfanyl-N(6)-dimethylallyladenosine(37) in tRNA + (sulfur carrier)-H + 5'-deoxyadenosine + L-methionine + A + S-adenosyl-L-homocysteine + 2 H(+). Catalyzes the methylthiolation of N6-(dimethylallyl)adenosine (i(6)A), leading to the formation of 2-methylthio-N6-(dimethylallyl)adenosine (ms(2)i(6)A) at position 37 in tRNAs that read codons beginning with uridine. The chain is tRNA-2-methylthio-N(6)-dimethylallyladenosine synthase from Sodalis glossinidius (strain morsitans).